The chain runs to 119 residues: Tubulin-specific chaperone A (119 aa).

The protein belongs to the TBCA family. As to quaternary structure, supercomplex made of cofactors A to E. Cofactors A and D function by capturing and stabilizing tubulin in a quasi-native conformation. Cofactor E binds to the cofactor D-tubulin complex; interaction with cofactor C then causes the release of tubulin polypeptides that are committed to the native state.

It is found in the cytoplasm. The protein localises to the cytoskeleton. Functionally, required for the maintenance of microtubule structures and cell polarity. Beta-tubulin-folding protein; may have a regulatory role in the tubulin-folding pathway. This chain is Tubulin-specific chaperone A (alp31), found in Schizosaccharomyces pombe (strain 972 / ATCC 24843) (Fission yeast).